An 83-amino-acid chain; its full sequence is Exodeoxyribonuclease 7 small subunit (83 aa).

It belongs to the XseB family. Heterooligomer composed of large and small subunits.

It is found in the cytoplasm. The enzyme catalyses Exonucleolytic cleavage in either 5'- to 3'- or 3'- to 5'-direction to yield nucleoside 5'-phosphates.. Functionally, bidirectionally degrades single-stranded DNA into large acid-insoluble oligonucleotides, which are then degraded further into small acid-soluble oligonucleotides. The protein is Exodeoxyribonuclease 7 small subunit of Allorhizobium ampelinum (strain ATCC BAA-846 / DSM 112012 / S4) (Agrobacterium vitis (strain S4)).